Here is a 1960-residue protein sequence, read N- to C-terminus: [F-actin]-monooxygenase MICAL3 (1960 aa).

The monooxygenase domain stretch occupies residues 2-494 (EESKNEATNR…RHLYDTGDTK (493 aa)). FAD contacts are provided by residues cysteine 97, 116 to 118 (EKR), 123 to 125 (RNN), phenylalanine 183, tyrosine 298, and aspartate 398. Positions 518 to 624 (VARSSKLLGW…YLTQFYEMFK (107 aa)) constitute a Calponin-homology (CH) domain. A Phosphoserine modification is found at serine 649. Residues 658 to 704 (GQTISRKRSPKDKKEKDLDGAGKRRKTSQSEEEDTPRGHRGARPTLV) form a disordered region. Positions 669–679 (DKKEKDLDGAG) are enriched in basic and acidic residues. Phosphoserine is present on residues serine 685 and serine 687. The LIM zinc-binding domain occupies 762–824 (DTCYFCQKRV…KPHYCYRLSG (63 aa)). The Zn(2+) site is built by cysteine 764, cysteine 767, histidine 785, cysteine 788, cysteine 791, cysteine 794, cysteine 814, and histidine 817. Disordered stretches follow at residues 826–887 (AQRK…LRGT) and 906–1295 (LEEV…EALK). Threonine 887 is modified (phosphothreonine). Serine 971 carries the phosphoserine modification. Over residues 984-1014 (GEEEEEDEEDEEEEEEEEDEEDEEEDEDESS) the composition is skewed to acidic residues. Basic and acidic residues-rich tracts occupy residues 1039–1051 (HWTH…EERA) and 1072–1084 (DVDS…KGEA). Serine 1129, serine 1139, serine 1156, and serine 1188 each carry phosphoserine. Composition is skewed to pro residues over residues 1192-1203 (SPLPEPSTPPAE) and 1217-1233 (RTPP…PPTQ). The residue at position 1250 (serine 1250) is a Phosphoserine. Residue threonine 1252 is modified to Phosphothreonine. Residues serine 1254, serine 1286, and serine 1313 each carry the phosphoserine modification. Polar residues predominate over residues 1277-1286 (QGVTKDTLGS). Disordered stretches follow at residues 1316 to 1550 (LTPV…KRGL) and 1564 to 1782 (RMRA…EEEL). Threonine 1317 is modified (phosphothreonine). Residues 1379–1393 (PDREPKGPREEHRDL) show a composition bias toward basic and acidic residues. Residues 1394–1406 (SSSSGLGLQGSSS) are compositionally biased toward low complexity. Position 1404 is a phosphoserine (serine 1404). The segment covering 1407–1425 (RTRTPGSQSFNTSDSTMLT) has biased composition (polar residues). Phosphothreonine is present on threonine 1425. Positions 1485–1503 (SVDEIPFADDVEDTYDDNT) are enriched in acidic residues. Low complexity predominate over residues 1594-1611 (AAAAPRTPRTPAPRRATA). The span at 1616 to 1627 (GPEEPAPRHEAT) shows a compositional bias: basic and acidic residues. Over residues 1633–1653 (SPPSDSGGPDGSVTSSEGSSG) the composition is skewed to low complexity. The span at 1654-1672 (KSKKRSSLFSPRRSKKEKK) shows a compositional bias: basic residues. Phosphoserine occurs at positions 1660 and 1663. Over residues 1718-1727 (CPSTPSSGTT) the composition is skewed to polar residues. Positions 1762-1778 (VLERTSQKSRKEPRTYT) are enriched in basic and acidic residues. The stretch at 1779-1952 (EEELNAKLTR…DKDLEAAMLS (174 aa)) forms a coiled coil. Residues 1799–1948 (KQEELKRLHR…EKEEDKDLEA (150 aa)) enclose the bMERB domain. Serine 1870 bears the Phosphoserine mark.

It belongs to the Mical family. Interacts with RAB1B, RAB8A, RAB10, RAB13 and RAB15 (in their GTP-bound forms); binding to RAB1B is of low affinity compared to other Rab proteins; at least in case of RAB8A can bind 2 molecules of RAB8A simultaneously through a high and a low affinity binding site, respectively. Interacts with ERC1 and RAB8A; may bridge ERC1 with RAB8A. Interacts with KIF23 and ERC1; enhances the interaction between KIF23 and ERC1. Interacts with NINL. The cofactor is FAD.

The protein resides in the cytoplasm. The protein localises to the cell cortex. It localises to the cytoskeleton. Its subcellular location is the nucleus. It is found in the midbody. The protein resides in the spindle. The protein localises to the cilium basal body. It carries out the reaction L-methionyl-[F-actin] + NADPH + O2 + H(+) = L-methionyl-(R)-S-oxide-[F-actin] + NADP(+) + H2O. Monooxygenase that promotes depolymerization of F-actin by mediating oxidation of specific methionine residues on actin to form methionine-sulfoxide, resulting in actin filament disassembly and preventing repolymerization. In the absence of actin, it also functions as a NADPH oxidase producing H(2)O(2). Seems to act as Rab effector protein and play a role in vesicle trafficking. Involved in exocytic vesicles tethering and fusion: the monooxygenase activity is required for this process and implicates RAB8A associated with exocytotic vesicles. Required for cytokinesis. Contributes to stabilization and/or maturation of the intercellular bridge independently of its monooxygenase activity. Promotes recruitment of Rab8 and ERC1 to the intercellular bridge, and together these proteins are proposed to function in timely abscission. The polypeptide is [F-actin]-monooxygenase MICAL3 (MICAL3) (Bos taurus (Bovine)).